Reading from the N-terminus, the 150-residue chain is Large ribosomal subunit protein bL9 (150 aa).

Belongs to the bacterial ribosomal protein bL9 family.

In terms of biological role, binds to the 23S rRNA. In Shewanella denitrificans (strain OS217 / ATCC BAA-1090 / DSM 15013), this protein is Large ribosomal subunit protein bL9.